We begin with the raw amino-acid sequence, 226 residues long: UPF0758 protein SPD_0975 (226 aa).

An MPN domain is found at 103–225; it reads SILSSQKLAK…YFSYREKTDL (123 aa). 3 residues coordinate Zn(2+): histidine 174, histidine 176, and aspartate 187. Positions 174 to 187 match the JAMM motif motif; that stretch reads HNHPSGAVAPSQND.

Belongs to the UPF0758 family.

The protein is UPF0758 protein SPD_0975 of Streptococcus pneumoniae serotype 2 (strain D39 / NCTC 7466).